We begin with the raw amino-acid sequence, 1131 residues long: Activity-dependent neuroprotector homeobox protein 2 (1131 aa).

The segment at 73-96 (YCCGLCKYSTKVLTSFKNHLHRYH) adopts a C2H2-type 1 zinc-finger fold. The C2H2-type 2; degenerate zinc finger occupies 106–128 (IPCPNCVFASQPKVVGRHFRMFH). Glycyl lysine isopeptide (Lys-Gly) (interchain with G-Cter in SUMO2) cross-links involve residues Lys118 and Lys146. The C2H2-type 3; degenerate zinc finger occupies 155 to 178 (FTCLKCNFSNTLYYSMKKHVLVAH). The C2H2-type 4 zinc-finger motif lies at 215-240 (YYCKKCNANASSQDALMYHILTSDIH). Over residues 274-285 (LAAPANGSAPSA) the composition is skewed to low complexity. Residues 274–329 (LAAPANGSAPSAPAQPPCFHLALPQNSPSPAAGQPVTVAQGAPGSLTHSPPAAGQS) are disordered. The C2H2-type 5; degenerate zinc-finger motif lies at 694–716 (KTCPVCNELFPSNVYQVHMEVAH). The C2H2-type 6; degenerate zinc finger occupies 747-768 (VRCLSCKCLVSEEELIHHLLMH). 2 consecutive C2H2-type zinc fingers follow at residues 770–793 (LGCL…RNRH) and 875–898 (STCP…KERH). Residues 913-937 (FKCIHCCGVYTGNMTLAAIAVHLVR) form a C2H2-type 9; degenerate zinc finger. Glycyl lysine isopeptide (Lys-Gly) (interchain with G-Cter in SUMO2) cross-links involve residues Lys979 and Lys1018. Ser1024 is subject to Phosphoserine. A Glycyl lysine isopeptide (Lys-Gly) (interchain with G-Cter in SUMO1); alternate cross-link involves residue Lys1032. Lys1032 participates in a covalent cross-link: Glycyl lysine isopeptide (Lys-Gly) (interchain with G-Cter in SUMO2); alternate. A DNA-binding region (homeobox) is located at residues 1043–1102 (PKKYEGRSYEEKKQFLKDYFHKKPYPSKKEIELLSSLFWVWKIDVASFFGKRRYICMKAI).

Belongs to the krueppel C2H2-type zinc-finger protein family. May interact with SMARCA4/BRG1.

It is found in the nucleus. In terms of biological role, may be involved in transcriptional regulation. May play a role in neuronal function; perhaps involved in protection of brain tissues from oxidative stress. May be involved in erythroid differentiation. The sequence is that of Activity-dependent neuroprotector homeobox protein 2 (ADNP2) from Homo sapiens (Human).